Consider the following 345-residue polypeptide: Golgi-associated RAB2 interactor protein 1B (345 aa).

2 disordered regions span residues 222 to 241 and 271 to 299; these read CSPS…SQPS and SRSS…PCTR. Over residues 275–285 the composition is skewed to basic and acidic residues; sequence KKTENKKDSSG.

This sequence belongs to the GARIN family.

The protein resides in the golgi apparatus. RAB2B effector protein required for accurate acrosome formation and normal male fertility. In complex with RAB2A/RAB2B, seems to suppress excessive vesicle trafficking during acrosome formation. The chain is Golgi-associated RAB2 interactor protein 1B (GARIN1B) from Bos taurus (Bovine).